The following is a 960-amino-acid chain: Cyclin-dependent kinase-like 5 (960 aa).

The 285-residue stretch at 13–297 (FEILGVVGEG…TEQCLNHPTF (285 aa)) folds into the Protein kinase domain. ATP-binding positions include 19–27 (VGEGAYGVV) and Lys-42. Catalysis depends on Asp-135, which acts as the Proton acceptor. Disordered stretches follow at residues 300-349 (QRLL…IQNL), 382-566 (KTYQ…RHSK), 646-834 (SPQP…TQSQ), and 848-960 (ASNH…ETAL). Polar residues-rich tracts occupy residues 319–336 (ESST…TALQ) and 382–402 (KTYQ…NNNI). Ser-407 carries the post-translational modification Phosphoserine. A compositionally biased stretch (basic and acidic residues) spans 407 to 417 (SPKEAKSKTEF). Polar residues-rich tracts occupy residues 434–462 (LKSN…QPNE), 473–482 (IPQSSRSPSY), and 510–548 (EPST…SGRN). Position 479 is a phosphoserine (Ser-479). 2 stretches are compositionally biased toward basic and acidic residues: residues 549–559 (NRNEGTLDSRR) and 679–704 (QKSE…RHLY). Ser-720 bears the Phosphoserine mark. The span at 728–748 (HENNVSTRVSSLPSESSSGTN) shows a compositional bias: polar residues. Ser-761 is modified (phosphoserine). A compositionally biased stretch (basic and acidic residues) spans 769-778 (EQLKEKEKQG). Residues 791 to 816 (QTVPNSDSPDLLTLQKSIHSASTPSS) are compositionally biased toward polar residues. Over residues 817–827 (RPKEWRPEKIS) the composition is skewed to basic and acidic residues. Composition is skewed to polar residues over residues 862-872 (LTAQQTKNSFS), 880-890 (SQASGGSSNIR), and 914-928 (SSVT…SYSE).

This sequence belongs to the protein kinase superfamily. CMGC Ser/Thr protein kinase family. CDC2/CDKX subfamily. In terms of assembly, interacts with MECP2. In terms of processing, autophosphorylated. Expressed in brain, lung, kidney, prostate, ovary, placenta, pancreas and testis. As to expression, predominant transcript in brain.

Its subcellular location is the nucleus. It localises to the cytoplasm. The protein resides in the cytoskeleton. It is found in the cilium basal body. The protein localises to the microtubule organizing center. Its subcellular location is the centrosome. The catalysed reaction is L-seryl-[protein] + ATP = O-phospho-L-seryl-[protein] + ADP + H(+). It catalyses the reaction L-threonyl-[protein] + ATP = O-phospho-L-threonyl-[protein] + ADP + H(+). Mediates phosphorylation of MECP2. May regulate ciliogenesis. This is Cyclin-dependent kinase-like 5 from Homo sapiens (Human).